The following is a 298-amino-acid chain: Oxygen-dependent coproporphyrinogen-III oxidase (298 aa).

A substrate-binding site is contributed by serine 90. Positions 94 and 104 each coordinate a divalent metal cation. The Proton donor role is filled by histidine 104. Position 106 to 108 (106 to 108) interacts with substrate; sequence NVR. 2 residues coordinate a divalent metal cation: histidine 143 and histidine 173. Residues 238-273 form an important for dimerization region; it reads YVEFNLVWDRGTLFGLQSGGRTESILMSLPPIVKWR. Residue 256 to 258 coordinates substrate; the sequence is GGR.

The protein belongs to the aerobic coproporphyrinogen-III oxidase family. In terms of assembly, homodimer. Requires a divalent metal cation as cofactor.

It is found in the cytoplasm. It carries out the reaction coproporphyrinogen III + O2 + 2 H(+) = protoporphyrinogen IX + 2 CO2 + 2 H2O. It functions in the pathway porphyrin-containing compound metabolism; protoporphyrin-IX biosynthesis; protoporphyrinogen-IX from coproporphyrinogen-III (O2 route): step 1/1. Its function is as follows. Involved in the heme biosynthesis. Catalyzes the aerobic oxidative decarboxylation of propionate groups of rings A and B of coproporphyrinogen-III to yield the vinyl groups in protoporphyrinogen-IX. This is Oxygen-dependent coproporphyrinogen-III oxidase from Dechloromonas aromatica (strain RCB).